We begin with the raw amino-acid sequence, 1320 residues long: Probable inactive ATP-dependent zinc metalloprotease FTSHI 5, chloroplastic (1320 aa).

The N-terminal 43 residues, 1 to 43, are a transit peptide targeting the chloroplast; it reads MDFISASSLSSPFSTQLSPIYLSSGIVSLKPRHRVKNRNFGSR. A run of 3 helical transmembrane segments spans residues 571-591, 633-653, and 695-715; these read LYLK…WIPM, NIND…IIPY, and FQWF…LYHV. 824–831 lines the ATP pocket; the sequence is GERGTGKT.

It in the N-terminal section; belongs to the AAA ATPase family. In the C-terminal section; belongs to the peptidase M41 family. Oligomer.

It localises to the plastid. The protein localises to the chloroplast membrane. Functionally, required for plastid development during embryogenesis. Might be involved in chaperone functions or play a structural role in the thylakoid FtsH complex. The sequence is that of Probable inactive ATP-dependent zinc metalloprotease FTSHI 5, chloroplastic from Arabidopsis thaliana (Mouse-ear cress).